Consider the following 353-residue polypeptide: Phospho-N-acetylmuramoyl-pentapeptide-transferase (353 aa).

Transmembrane regions (helical) follow at residues 24-44 (LGFFIAFFLTLFLMPKFILWA), 66-86 (TPTMGGIVFVFATIVASVLCA), 88-108 (LGNLYVLLGMIVLVGFSFVGF), 129-149 (FGMLFVLSLVVSVLLSLKGLD), 160-180 (PLFEMPTILAVGFWVLVFLST), 192-212 (GLASVPSIFTLLSLSIFVYVA), 229-249 (VGELFVISLALVGSLFGFLWY), 256-276 (VFMGDSGSLALGGFIAYNAIV), 281-301 (ILLVLMGLIFVVETLSVILQV), and 330-350 (KVIVRFWIISMLSNLVALLSL).

The protein belongs to the glycosyltransferase 4 family. MraY subfamily. Mg(2+) serves as cofactor.

The protein localises to the cell inner membrane. The catalysed reaction is UDP-N-acetyl-alpha-D-muramoyl-L-alanyl-gamma-D-glutamyl-meso-2,6-diaminopimeloyl-D-alanyl-D-alanine + di-trans,octa-cis-undecaprenyl phosphate = di-trans,octa-cis-undecaprenyl diphospho-N-acetyl-alpha-D-muramoyl-L-alanyl-D-glutamyl-meso-2,6-diaminopimeloyl-D-alanyl-D-alanine + UMP. It functions in the pathway cell wall biogenesis; peptidoglycan biosynthesis. Functionally, catalyzes the initial step of the lipid cycle reactions in the biosynthesis of the cell wall peptidoglycan: transfers peptidoglycan precursor phospho-MurNAc-pentapeptide from UDP-MurNAc-pentapeptide onto the lipid carrier undecaprenyl phosphate, yielding undecaprenyl-pyrophosphoryl-MurNAc-pentapeptide, known as lipid I. The chain is Phospho-N-acetylmuramoyl-pentapeptide-transferase from Helicobacter pylori (strain Shi470).